Consider the following 285-residue polypeptide: 2-dehydro-3-deoxyphosphooctonate aldolase (285 aa).

The protein belongs to the KdsA family.

It is found in the cytoplasm. The enzyme catalyses D-arabinose 5-phosphate + phosphoenolpyruvate + H2O = 3-deoxy-alpha-D-manno-2-octulosonate-8-phosphate + phosphate. It participates in carbohydrate biosynthesis; 3-deoxy-D-manno-octulosonate biosynthesis; 3-deoxy-D-manno-octulosonate from D-ribulose 5-phosphate: step 2/3. The protein operates within bacterial outer membrane biogenesis; lipopolysaccharide biosynthesis. The chain is 2-dehydro-3-deoxyphosphooctonate aldolase from Polaromonas sp. (strain JS666 / ATCC BAA-500).